The sequence spans 339 residues: Quinolinate synthase (339 aa).

Iminosuccinate contacts are provided by histidine 63 and serine 81. Cysteine 126 is a [4Fe-4S] cluster binding site. Iminosuccinate-binding positions include 152–154 and serine 169; that span reads YVN. Cysteine 211 provides a ligand contact to [4Fe-4S] cluster. Iminosuccinate is bound by residues 237-239 and threonine 254; that span reads HPE. Cysteine 297 is a [4Fe-4S] cluster binding site.

The protein belongs to the quinolinate synthase family. Type 2 subfamily. It depends on [4Fe-4S] cluster as a cofactor.

The protein resides in the cytoplasm. It catalyses the reaction iminosuccinate + dihydroxyacetone phosphate = quinolinate + phosphate + 2 H2O + H(+). It participates in cofactor biosynthesis; NAD(+) biosynthesis; quinolinate from iminoaspartate: step 1/1. Functionally, catalyzes the condensation of iminoaspartate with dihydroxyacetone phosphate to form quinolinate. This Xylella fastidiosa (strain Temecula1 / ATCC 700964) protein is Quinolinate synthase.